A 124-amino-acid polypeptide reads, in one-letter code: Large ribosomal subunit protein bL12 (124 aa).

Belongs to the bacterial ribosomal protein bL12 family. Homodimer. Part of the ribosomal stalk of the 50S ribosomal subunit. Forms a multimeric L10(L12)X complex, where L10 forms an elongated spine to which 2 to 4 L12 dimers bind in a sequential fashion. Binds GTP-bound translation factors.

Functionally, forms part of the ribosomal stalk which helps the ribosome interact with GTP-bound translation factors. Is thus essential for accurate translation. This chain is Large ribosomal subunit protein bL12, found in Jannaschia sp. (strain CCS1).